The primary structure comprises 555 residues: DNA repair and recombination protein rhm52 (555 aa).

Residues 148 to 152 mediate DNA binding; sequence KRALR. 2 disordered regions span residues 197-232 and 251-555; these read VVAE…DSFD and HPDE…MKLN. The segment covering 260 to 276 has biased composition (low complexity); the sequence is NSHASGSSGNTGASTTN. Composition is skewed to polar residues over residues 283–300 and 312–334; these read SGNQ…SRMN and TPNH…QNNH. 2 stretches are compositionally biased toward low complexity: residues 354–375 and 382–404; these read NNNN…GPQQ and NGAA…AVAR. The segment covering 468–478 has biased composition (polar residues); it reads DNPSNNAGNGV. The span at 479–490 shows a compositional bias: low complexity; sequence QNQPQKPQPSQQ. Over residues 491 to 500 the composition is skewed to polar residues; the sequence is RGSILNPQFD. Residues 536 to 547 are compositionally biased toward low complexity; that stretch reads PNGTSNGNGTPG.

It belongs to the RAD52 family. In terms of assembly, part of a complex that includes RAD51, RAD52 and RAD59.

The protein localises to the nucleus. Functionally, involved in DNA double-strand break (DSB) repair and recombination. Promotes the annealing of complementary single-stranded DNA and by stimulation of the RAD51 recombinase. This is DNA repair and recombination protein rhm52 (RHM52) from Pyricularia oryzae (strain 70-15 / ATCC MYA-4617 / FGSC 8958) (Rice blast fungus).